The sequence spans 338 residues: E3 ubiquitin-protein ligase RING1 (338 aa).

The interval T102–G124 is disordered. The segment covering I110–T121 has biased composition (polar residues). Residues C224–R265 form an RING-type; atypical zinc finger. Composition is skewed to basic and acidic residues over residues E267 to V279 and S298 to F309. Positions E267–D338 are disordered.

Auto-ubiquitinated as part of the enzymatic reaction. As to expression, mostly expressed in cotton fibers, and, to a lower extent, in leaves and flowers.

It catalyses the reaction S-ubiquitinyl-[E2 ubiquitin-conjugating enzyme]-L-cysteine + [acceptor protein]-L-lysine = [E2 ubiquitin-conjugating enzyme]-L-cysteine + N(6)-ubiquitinyl-[acceptor protein]-L-lysine.. The protein operates within protein modification; protein ubiquitination. E3 ubiquitin-protein ligase which accepts ubiquitin from an E2 ubiquitin-conjugating enzyme in the form of a thioester and then directly transfers the ubiquitin to targeted substrates. Promotes polyubiquitination of target proteins. The protein is E3 ubiquitin-protein ligase RING1 (RING1) of Gossypium hirsutum (Upland cotton).